The chain runs to 62 residues: Synergistic-type venom protein S2C4 (62 aa).

Cystine bridges form between cysteine 3–cysteine 24, cysteine 17–cysteine 42, and cysteine 46–cysteine 57.

It belongs to the three-finger toxin family. Short-chain subfamily. Aminergic toxin sub-subfamily. Homodimer; disulfide-linked. As to expression, expressed by the venom gland.

The protein localises to the secreted. In terms of biological role, this protein shows a synergetic toxic effect in that it enhances the toxicity of other toxins. The protein is Synergistic-type venom protein S2C4 of Dendroaspis jamesoni kaimosae (Eastern Jameson's mamba).